A 198-amino-acid chain; its full sequence is Endonuclease V (198 aa).

Positions 38 and 101 each coordinate Mg(2+).

It belongs to the endonuclease V family. Mg(2+) serves as cofactor.

The protein localises to the cytoplasm. The enzyme catalyses Endonucleolytic cleavage at apurinic or apyrimidinic sites to products with a 5'-phosphate.. In terms of biological role, DNA repair enzyme involved in the repair of deaminated bases. Selectively cleaves double-stranded DNA at the second phosphodiester bond 3' to a deoxyinosine leaving behind the intact lesion on the nicked DNA. This chain is Endonuclease V, found in Saccharolobus islandicus (strain M.16.27) (Sulfolobus islandicus).